We begin with the raw amino-acid sequence, 510 residues long: Glycogen synthase (510 aa).

Lys-18 is a binding site for ADP-alpha-D-glucose.

It belongs to the glycosyltransferase 1 family. Bacterial/plant glycogen synthase subfamily.

The catalysed reaction is [(1-&gt;4)-alpha-D-glucosyl](n) + ADP-alpha-D-glucose = [(1-&gt;4)-alpha-D-glucosyl](n+1) + ADP + H(+). Its pathway is glycan biosynthesis; glycogen biosynthesis. Functionally, synthesizes alpha-1,4-glucan chains using ADP-glucose. The protein is Glycogen synthase of Bordetella parapertussis (strain 12822 / ATCC BAA-587 / NCTC 13253).